The primary structure comprises 314 residues: Homoserine kinase (314 aa).

Position 95 to 105 (95 to 105 (PHSRGLGSSAS)) interacts with ATP.

This sequence belongs to the GHMP kinase family. Homoserine kinase subfamily.

It localises to the cytoplasm. It catalyses the reaction L-homoserine + ATP = O-phospho-L-homoserine + ADP + H(+). It participates in amino-acid biosynthesis; L-threonine biosynthesis; L-threonine from L-aspartate: step 4/5. Its function is as follows. Catalyzes the ATP-dependent phosphorylation of L-homoserine to L-homoserine phosphate. The polypeptide is Homoserine kinase (Mycobacterium ulcerans (strain Agy99)).